The sequence spans 64 residues: MGMRMMFTVFLLVVLATTVVSFPSERASDGRDDTAKDEGSDMDKLVEKKECCNPACGRHYSCGR.

Residues 1-21 form the signal peptide; it reads MGMRMMFTVFLLVVLATTVVS. A propeptide spanning residues 22–49 is cleaved from the precursor; the sequence is FPSERASDGRDDTAKDEGSDMDKLVEKK. 2 cysteine pairs are disulfide-bonded: C51/C56 and C52/C62. Position 62 is a cysteine amide (C62).

It belongs to the conotoxin A superfamily. Post-translationally, not hydroxylated; hydroxylation, on a synthetic hydroxylated GI, improves its folding but impairs its activity against target receptors. In terms of tissue distribution, expressed by the venom duct.

It is found in the secreted. Its function is as follows. Alpha-conotoxins act on postsynaptic membranes, they bind to the nicotinic acetylcholine receptors (nAChR) and thus inhibit them. Reversibly inhibits mammalian muscle nAChR (IC(50)=339 nM on adult subtype (alpha-1-beta-1-gamma-delta/CHRNA1-CHRNB1-CHRNG-CHRND) and IC(50)=5.86-995 nM on fetal subtype (alpha-1-beta-1-delta-epsilon/CHRNA1-CHRNB1-CHRND-CHRNE)). The higher affinity site is the alpha/delta site on mouse muscle-derived BC3H-1 receptor, and the other site (alpha/gamma site) on nicotinic receptors from Torpedo californica electric organ. This Conus geographus (Geography cone) protein is Alpha-conotoxin GI.